The following is a 269-amino-acid chain: Troponin I (269 aa).

Positions 1 to 104 are disordered; sequence MADDEKKAAA…AKKGFMTPER (104 aa). Ala-2 carries the N-acetylalanine modification. The segment covering 9–50 has biased composition (low complexity); the sequence is AAPAAAPAAAAKPAAPAAAPAANGKAAPAANGKAAPAAAAAP. Residues 56–91 show a composition bias toward basic and acidic residues; that stretch reads DPNDPKVKAEEAKKAKQAEIERKRAEVRKRMEEASK. A troponin T-interaction region spans residues 162–171; sequence ERMYICEGQK. Residues 189-202 are actin-binding; sequence NAQVNDLRGKFVKP. 2 positions are modified to N6,N6,N6-trimethyllysine: Lys-201 and Lys-205. The interval 239 to 269 is disordered; it reads TLEEEEKEKKPDWSKGKPGDAKVKEEVEAEA.

The protein belongs to the troponin I family. In terms of assembly, binds to actin and tropomyosin. As to expression, all isoforms are expressed in somatic muscle. Isoforms containing exon 6a1 (isoforms 1 and 2) are expressed in all muscles but highest expression is in abdominal muscle and splanchnic muscle of the gut. Isoforms containing exon 6b1 (isoforms 5, 6, 9 and 10) are highly expressed in the tergal depressor of trochanter (TDT) muscle.

In terms of biological role, troponin I is the ATPase inhibitory subunit of troponin in the thin filament regulatory complex. Involved in the development and maintenance of muscle and nervous system. May also be involved in the cytoskeletal apparatus. This is Troponin I (wupA) from Drosophila melanogaster (Fruit fly).